The primary structure comprises 440 residues: Thymidine phosphorylase (440 aa).

Belongs to the thymidine/pyrimidine-nucleoside phosphorylase family. In terms of assembly, homodimer.

It catalyses the reaction thymidine + phosphate = 2-deoxy-alpha-D-ribose 1-phosphate + thymine. The protein operates within pyrimidine metabolism; dTMP biosynthesis via salvage pathway; dTMP from thymine: step 1/2. The enzymes which catalyze the reversible phosphorolysis of pyrimidine nucleosides are involved in the degradation of these compounds and in their utilization as carbon and energy sources, or in the rescue of pyrimidine bases for nucleotide synthesis. This is Thymidine phosphorylase from Shigella flexneri serotype 5b (strain 8401).